The primary structure comprises 484 residues: AMP nucleosidase (484 aa).

Belongs to the AMP nucleosidase family.

The catalysed reaction is AMP + H2O = adenine + D-ribose 5-phosphate. In terms of biological role, catalyzes the hydrolysis of the N-glycosidic bond of AMP to form adenine and ribose 5-phosphate. Involved in regulation of AMP concentrations. This Escherichia coli O157:H7 protein is AMP nucleosidase.